A 469-amino-acid polypeptide reads, in one-letter code: Probable glucuronoxylan glucuronosyltransferase F8H (469 aa).

The Cytoplasmic segment spans residues 1 to 36; sequence MSLDIKKPNITKTKKKKTGFVVKMQLNNNRGGNKRN. A helical; Signal-anchor for type II membrane protein membrane pass occupies residues 37–57; sequence IFIFFFFRNYYTWILWFCLSL. Topologically, residues 58–469 are lumenal; the sequence is YFFTSYFSVE…RVLSQREVDM (412 aa). N-linked (GlcNAc...) asparagine glycosylation is found at Asn-171, Asn-203, Asn-301, and Asn-411.

It belongs to the glycosyltransferase 47 family. In terms of tissue distribution, expressed in xylem cells in stems and in roots.

The protein localises to the golgi apparatus membrane. Involved in the synthesis of the hemicellulose glucuronoxylan, a major component of secondary cell walls. Probably involved in the synthesis of the glycosyl sequence at the glucuronoxylan reducing end. The protein is Probable glucuronoxylan glucuronosyltransferase F8H (F8H) of Arabidopsis thaliana (Mouse-ear cress).